The following is a 225-amino-acid chain: Large ribosomal subunit protein bL25 (225 aa).

The interval 197-225 (PQREEQMEDTDTAAADEEGDKEEDADKQE) is disordered. Residues 202-225 (QMEDTDTAAADEEGDKEEDADKQE) show a composition bias toward acidic residues.

This sequence belongs to the bacterial ribosomal protein bL25 family. CTC subfamily. Part of the 50S ribosomal subunit; part of the 5S rRNA/L5/L18/L25 subcomplex. Contacts the 5S rRNA. Binds to the 5S rRNA independently of L5 and L18.

This is one of the proteins that binds to the 5S RNA in the ribosome where it forms part of the central protuberance. In Dichelobacter nodosus (strain VCS1703A), this protein is Large ribosomal subunit protein bL25.